Here is a 131-residue protein sequence, read N- to C-terminus: MAKKKRTRGPKKEKRIVPVGVAHINSTFNNTIVTITDPEGNVLTWGSGGTAGFKGTKKGTPFAAQLAAEMAAKKAISEYGMKKVDVLVKGPGPGRETAIRALQAAGLEISLIKDVTPIPHNGCRPPRRRRV.

This sequence belongs to the universal ribosomal protein uS11 family. Part of the 30S ribosomal subunit. Interacts with proteins S7 and S18. Binds to IF-3.

Located on the platform of the 30S subunit, it bridges several disparate RNA helices of the 16S rRNA. Forms part of the Shine-Dalgarno cleft in the 70S ribosome. The protein is Small ribosomal subunit protein uS11 of Dictyoglomus turgidum (strain DSM 6724 / Z-1310).